A 268-amino-acid polypeptide reads, in one-letter code: NADPH-dependent 7-cyano-7-deazaguanine reductase (268 aa).

Residue 79–81 (VES) participates in substrate binding. Residue 81-82 (SK) participates in NADPH binding. Cys-176 (thioimide intermediate) is an active-site residue. The active-site Proton donor is the Asp-183. 215–216 (HE) is a substrate binding site. NADPH is bound at residue 244–245 (RG).

This sequence belongs to the GTP cyclohydrolase I family. QueF type 2 subfamily. In terms of assembly, homodimer.

It is found in the cytoplasm. The catalysed reaction is 7-aminomethyl-7-carbaguanine + 2 NADP(+) = 7-cyano-7-deazaguanine + 2 NADPH + 3 H(+). It participates in tRNA modification; tRNA-queuosine biosynthesis. Its function is as follows. Catalyzes the NADPH-dependent reduction of 7-cyano-7-deazaguanine (preQ0) to 7-aminomethyl-7-deazaguanine (preQ1). This chain is NADPH-dependent 7-cyano-7-deazaguanine reductase, found in Saccharophagus degradans (strain 2-40 / ATCC 43961 / DSM 17024).